A 142-amino-acid polypeptide reads, in one-letter code: 3-hydroxyacyl-[acyl-carrier-protein] dehydratase FabZ (142 aa).

The active site involves His48.

This sequence belongs to the thioester dehydratase family. FabZ subfamily.

The protein localises to the cytoplasm. It catalyses the reaction a (3R)-hydroxyacyl-[ACP] = a (2E)-enoyl-[ACP] + H2O. Functionally, involved in unsaturated fatty acids biosynthesis. Catalyzes the dehydration of short chain beta-hydroxyacyl-ACPs and long chain saturated and unsaturated beta-hydroxyacyl-ACPs. This Natranaerobius thermophilus (strain ATCC BAA-1301 / DSM 18059 / JW/NM-WN-LF) protein is 3-hydroxyacyl-[acyl-carrier-protein] dehydratase FabZ.